Here is a 33-residue protein sequence, read N- to C-terminus: MNTELIVQLGSLTLITLAGPLVVVLLFLKQGNL.

Residues 5 to 25 (LIVQLGSLTLITLAGPLVVVL) form a helical membrane-spanning segment.

This sequence belongs to the Psb30/Ycf12 family. In terms of assembly, PSII is composed of 1 copy each of membrane proteins PsbA, PsbB, PsbC, PsbD, PsbE, PsbF, PsbH, PsbI, PsbJ, PsbK, PsbL, PsbM, PsbT, PsbY, PsbZ, Psb30/Ycf12, peripheral proteins of the oxygen-evolving complex and a large number of cofactors. It forms dimeric complexes.

Its subcellular location is the plastid. The protein localises to the chloroplast thylakoid membrane. Functionally, a core subunit of photosystem II (PSII), probably helps stabilize the reaction center. The chain is Photosystem II reaction center protein Psb30 from Euglena deses.